The chain runs to 495 residues: MADRNLRDLLAPWVPDAPSRALREMTLDSRVAAAGDLFVAVVGHQADGRRYIPQAIAQGVAAIIAEAKDEATDGEIREMHGVPVIYLSQLNERLSALAGRFYHEPSDNLRLVGVTGTNGKTTTTQLLAQWSQLLGETSAVMGTVGNGLLGKVIPTENTTGSAVDVQHELAGLVDQGATFCAMEVSSHGLVQHRVAALKFPASVFTNLSRDHLDYHGDMEHYEAAKWLLYSEHHCGQAIINADDEVGRRWLAKLPDAVAVSMEDHINPNCHGRWLKATEVNYHDSGATIRFSSSWGDGEIESHLMGAFNVSNLLLALATLLALGYPLADLLKTAARLQPVCGRMEVFTAPGKPTVVVDYAHTPDALEKALQAARLHCAGKLWCVFGCGGDRDKGKRPLMGAIAEEFADVAVVTDDNPRTEEPRAIINDILAGMLDAGHAKVMEGRAEAVTCAVMQAKENDVVLVAGKGHEDYQIVGNQRLDYSDRVTVARLLGGIA.

UDP-N-acetyl-alpha-D-muramoyl-L-alanyl-D-glutamate contacts are provided by residues L27, S29, and 44–46 (HQA). 116–122 (GTNGKTT) is a binding site for ATP. Residues N157, 158-159 (TT), S185, Q191, and R193 each bind UDP-N-acetyl-alpha-D-muramoyl-L-alanyl-D-glutamate. Position 225 is an N6-carboxylysine (K225). Meso-2,6-diaminopimelate is bound by residues R390, 414 to 417 (DNPR), G465, and E469. The short motif at 414–417 (DNPR) is the Meso-diaminopimelate recognition motif element.

It belongs to the MurCDEF family. MurE subfamily. Mg(2+) serves as cofactor. In terms of processing, carboxylation is probably crucial for Mg(2+) binding and, consequently, for the gamma-phosphate positioning of ATP.

The protein resides in the cytoplasm. It carries out the reaction UDP-N-acetyl-alpha-D-muramoyl-L-alanyl-D-glutamate + meso-2,6-diaminopimelate + ATP = UDP-N-acetyl-alpha-D-muramoyl-L-alanyl-gamma-D-glutamyl-meso-2,6-diaminopimelate + ADP + phosphate + H(+). Its pathway is cell wall biogenesis; peptidoglycan biosynthesis. In terms of biological role, catalyzes the addition of meso-diaminopimelic acid to the nucleotide precursor UDP-N-acetylmuramoyl-L-alanyl-D-glutamate (UMAG) in the biosynthesis of bacterial cell-wall peptidoglycan. This is UDP-N-acetylmuramoyl-L-alanyl-D-glutamate--2,6-diaminopimelate ligase from Shigella flexneri.